We begin with the raw amino-acid sequence, 977 residues long: Macrophage colony-stimulating factor 1 receptor (977 aa).

The first 19 residues, methionine 1 to glycine 19, serve as a signal peptide directing secretion. At alanine 20 to proline 515 the chain is on the extracellular side. 5 Ig-like C2-type domains span residues glutamate 24–proline 104, serine 107–arginine 197, glutamine 204–serine 298, alanine 299–arginine 397, and tyrosine 398–glutamine 503. 3 disulfide bridges follow: cysteine 42–cysteine 84, cysteine 127–cysteine 177, and cysteine 224–cysteine 278. N-linked (GlcNAc...) asparagine glycosylation is found at asparagine 45 and asparagine 73. Residues asparagine 302, asparagine 335, asparagine 389, asparagine 410, asparagine 449, asparagine 478, and asparagine 491 are each glycosylated (N-linked (GlcNAc...) asparagine). Cysteines 417 and 483 form a disulfide. A helical membrane pass occupies residues valine 516–tyrosine 536. Topologically, residues lysine 537–cysteine 977 are cytoplasmic. The interval glutamine 540–lysine 572 is regulatory juxtamembrane domain. Phosphotyrosine; by autocatalysis occurs at positions 544 and 559. One can recognise a Protein kinase domain in the interval leucine 580 to arginine 913. ATP-binding positions include leucine 586–valine 594 and lysine 614. Residues tyrosine 697 and tyrosine 706 each carry the phosphotyrosine; by autocatalysis modification. Serine 711 is subject to Phosphoserine. The residue at position 721 (tyrosine 721) is a Phosphotyrosine; by autocatalysis. Aspartate 776 serves as the catalytic Proton acceptor. The interval aspartate 794 to proline 816 is activation loop. Phosphotyrosine; by autocatalysis is present on residues tyrosine 807 and tyrosine 921. The tract at residues tyrosine 921–alanine 957 is disordered. Gly residues predominate over residues glycine 929–glycine 941. At tyrosine 974 the chain carries Phosphotyrosine; by autocatalysis.

It belongs to the protein kinase superfamily. Tyr protein kinase family. CSF-1/PDGF receptor subfamily. Monomer. Homodimer. Interacts with CSF1 and IL34. Interaction with dimeric CSF1 or IL34 leads to receptor homodimerization. Interacts with INPPL1/SHIP2 and THOC5. Interacts (tyrosine phosphorylated) with PLCG2 (via SH2 domain). Interacts (tyrosine phosphorylated) with PIK3R1 (via SH2 domain). Interacts (tyrosine phosphorylated) with FYN, YES1 and SRC (via SH2 domain). Interacts (tyrosine phosphorylated) with CBL, GRB2 and SLA2. Autophosphorylated in response to CSF1 or IL34 binding. Phosphorylation at Tyr-559 is important for normal down-regulation of signaling by ubiquitination, internalization and degradation. Phosphorylation at Tyr-559 and Tyr-807 is important for interaction with SRC family members, including FYN, YES1 and SRC, and for subsequent activation of these protein kinases. Phosphorylation at Tyr-697 and Tyr-921 is important for interaction with GRB2. Phosphorylation at Tyr-721 is important for interaction with PIK3R1. Phosphorylation at Tyr-721 and Tyr-807 is important for interaction with PLCG2. Phosphorylation at Tyr-974 is important for interaction with CBL. Dephosphorylation by PTPN2 negatively regulates downstream signaling and macrophage differentiation. Post-translationally, ubiquitinated. Becomes rapidly polyubiquitinated after autophosphorylation, leading to its degradation. In terms of tissue distribution, widely expressed.

It localises to the cell membrane. It carries out the reaction L-tyrosyl-[protein] + ATP = O-phospho-L-tyrosyl-[protein] + ADP + H(+). Its activity is regulated as follows. Present in an inactive conformation in the absence of bound ligand. CSF1 or IL34 binding leads to dimerization and activation by autophosphorylation on tyrosine residues. Inhibited by imatinib/STI-571 (Gleevec), dasatinib, sunitinib/SU11248, lestaurtinib/CEP-701, midostaurin/PKC-412, Ki20227, linifanib/ABT-869, Axitinib/AG013736, sorafenib/BAY 43-9006 and GW2580. In terms of biological role, tyrosine-protein kinase that acts as a cell-surface receptor for CSF1 and IL34 and plays an essential role in the regulation of survival, proliferation and differentiation of hematopoietic precursor cells, especially mononuclear phagocytes, such as macrophages and monocytes. Promotes the release of pro-inflammatory chemokines in response to IL34 and CSF1, and thereby plays an important role in innate immunity and in inflammatory processes. Plays an important role in the regulation of osteoclast proliferation and differentiation, the regulation of bone resorption, and is required for normal bone and tooth development. Required for normal male and female fertility, and for normal development of milk ducts and acinar structures in the mammary gland during pregnancy. Promotes reorganization of the actin cytoskeleton, regulates formation of membrane ruffles, cell adhesion and cell migration, and promotes cancer cell invasion. Activates several signaling pathways in response to ligand binding, including the ERK1/2 and the JNK pathway. Phosphorylates PIK3R1, PLCG2, GRB2, SLA2 and CBL. Activation of PLCG2 leads to the production of the cellular signaling molecules diacylglycerol and inositol 1,4,5-trisphosphate, that then lead to the activation of protein kinase C family members, especially PRKCD. Phosphorylation of PIK3R1, the regulatory subunit of phosphatidylinositol 3-kinase, leads to activation of the AKT1 signaling pathway. Activated CSF1R also mediates activation of the MAP kinases MAPK1/ERK2 and/or MAPK3/ERK1, and of the SRC family kinases SRC, FYN and YES1. Activated CSF1R transmits signals both via proteins that directly interact with phosphorylated tyrosine residues in its intracellular domain, or via adapter proteins, such as GRB2. Promotes activation of STAT family members STAT3, STAT5A and/or STAT5B. Promotes tyrosine phosphorylation of SHC1 and INPP5D/SHIP-1. Receptor signaling is down-regulated by protein phosphatases, such as INPP5D/SHIP-1, that dephosphorylate the receptor and its downstream effectors, and by rapid internalization of the activated receptor. In the central nervous system, may play a role in the development of microglia macrophages. This chain is Macrophage colony-stimulating factor 1 receptor (Csf1r), found in Mus musculus (Mouse).